A 774-amino-acid polypeptide reads, in one-letter code: Transcription factor MBS1 (774 aa).

One can recognise an HTH APSES-type domain in the interval 37 to 143; sequence EITFYDSGVP…YVPTSVSPPP (107 aa). Positions 68-89 form a DNA-binding region, H-T-H motif; it reads ATQILKVAGFDKPQRTRVLERE. Disordered regions lie at residues 135–180 and 209–229; these read VPTS…SAAA and RVSL…VASV. Over residues 155-165 the composition is skewed to basic and acidic residues; sequence ARRDKEKETGR. A compositionally biased stretch (polar residues) spans 166–176; the sequence is TKATPSRTGPT. ANK repeat units follow at residues 348–377 and 467–496; these read DGHT…SIFA and EGET…NPKI. The segment at 752–774 is disordered; sequence EEENDNQVYNTSAGESGPSSWVQ. Residues 757-774 are compositionally biased toward polar residues; it reads NQVYNTSAGESGPSSWVQ.

The protein localises to the nucleus. Its function is as follows. Transcription factor that positively regulates ergosterol biosynthesis and thereby affects polyene and azole drug susceptibility. Plays a role in maintenance of membrane stability and osmotic stress response. Involved in genotoxic and oxidative stress responses. Also promotes production of melanin and capsule and thereby is required for full virulence. The polypeptide is Transcription factor MBS1 (Cryptococcus neoformans var. grubii serotype A (strain H99 / ATCC 208821 / CBS 10515 / FGSC 9487) (Filobasidiella neoformans var. grubii)).